We begin with the raw amino-acid sequence, 205 residues long: High frequency lysogenization protein HflD homolog (205 aa).

This sequence belongs to the HflD family.

The protein localises to the cytoplasm. The protein resides in the cell inner membrane. The protein is High frequency lysogenization protein HflD homolog of Vibrio campbellii (strain ATCC BAA-1116).